Here is a 218-residue protein sequence, read N- to C-terminus: Small ribosomal subunit protein uS3c (218 aa).

One can recognise a KH type-2 domain in the interval 47-118; sequence VQKNIRISSG…KLNIAITRIS (72 aa).

This sequence belongs to the universal ribosomal protein uS3 family. Part of the 30S ribosomal subunit.

It is found in the plastid. It localises to the chloroplast. This is Small ribosomal subunit protein uS3c (rps3) from Lepidium virginicum (Virginia pepperweed).